Here is a 326-residue protein sequence, read N- to C-terminus: Aquaporin-3 (326 aa).

The next 2 membrane-spanning stretches (helical) occupy residues 24–44 and 64–84; these read LAEFLGTFLLVLLLNGMIITA and LAFGGGLAVMVAVLVSGGISG. Positions 88–90 match the NPA 1 motif; sequence NPA. Residues 107 to 127 form a helical membrane-spanning segment; sequence LVYIFMQYMGAFFAASILYAV. An N-linked (GlcNAc...) asparagine glycan is attached at asparagine 146. Transmembrane regions (helical) follow at residues 166 to 186 and 196 to 216; these read IFDAILGTGLLVMGIFAIIDP and IPLYVGFLISSLIFSFSYNAG. The short motif at 220–222 is the NPA 2 element; the sequence is NPA. Residues 247-267 form a helical membrane-spanning segment; sequence LWWLVPVIGPHVGGLLGGVTY. Asparagine 294 is a glycosylation site (N-linked (GlcNAc...) asparagine).

The protein belongs to the MIP/aquaporin (TC 1.A.8) family.

The protein localises to the cell membrane. Aquaglyceroporin that may modulate the water content and osmolytes during anhydrobiosis. The chain is Aquaporin-3 from Milnesium tardigradum (Water bear).